The sequence spans 255 residues: Pyridoxine 5'-phosphate synthase (255 aa).

Asn8 and Arg19 together coordinate 3-amino-2-oxopropyl phosphate. Catalysis depends on His44, which acts as the Proton acceptor. Positions 46 and 51 each coordinate 1-deoxy-D-xylulose 5-phosphate. The Proton acceptor role is filled by Glu74. Thr111 provides a ligand contact to 1-deoxy-D-xylulose 5-phosphate. His202 (proton donor) is an active-site residue. 3-amino-2-oxopropyl phosphate contacts are provided by residues Asp203 and 225 to 226 (GH).

The protein belongs to the PNP synthase family. Homooctamer; tetramer of dimers.

Its subcellular location is the cytoplasm. It catalyses the reaction 3-amino-2-oxopropyl phosphate + 1-deoxy-D-xylulose 5-phosphate = pyridoxine 5'-phosphate + phosphate + 2 H2O + H(+). It functions in the pathway cofactor biosynthesis; pyridoxine 5'-phosphate biosynthesis; pyridoxine 5'-phosphate from D-erythrose 4-phosphate: step 5/5. Catalyzes the complicated ring closure reaction between the two acyclic compounds 1-deoxy-D-xylulose-5-phosphate (DXP) and 3-amino-2-oxopropyl phosphate (1-amino-acetone-3-phosphate or AAP) to form pyridoxine 5'-phosphate (PNP) and inorganic phosphate. This is Pyridoxine 5'-phosphate synthase from Xanthomonas oryzae pv. oryzae (strain MAFF 311018).